The chain runs to 181 residues: Regulator of G-protein signaling 10 (181 aa).

A disordered region spans residues M1–T35. S24 and S41 each carry phosphoserine. Positions S41–K156 constitute an RGS domain. Residue C74 is the site of S-palmitoyl cysteine attachment. Positions P155–T181 are disordered. S176 is modified (phosphoserine).

As to quaternary structure, interacts with GNAZ, GNAI1 and GNAI3. Associates specifically with the activated, GTP-bound forms of GNAZ and GNAI3.

Its subcellular location is the cytoplasm. The protein localises to the cytosol. It localises to the nucleus. Its function is as follows. Regulates G protein-coupled receptor signaling cascades, including signaling downstream of the muscarinic acetylcholine receptor CHRM2. Inhibits signal transduction by increasing the GTPase activity of G protein alpha subunits, thereby driving them into their inactive GDP-bound form. Modulates the activity of potassium channels that are activated in response to CHRM2 signaling. Activity on GNAZ is inhibited by palmitoylation of the G-protein. This chain is Regulator of G-protein signaling 10 (Rgs10), found in Mus musculus (Mouse).